Consider the following 469-residue polypeptide: Repressible acid phosphatase (469 aa).

An N-terminal signal peptide occupies residues 1–16; that stretch reads MLSILLSLLSLSGTHA. 2 N-linked (GlcNAc...) asparagine glycosylation sites follow: Asn-23 and Asn-31. His-77 serves as the catalytic Nucleophile. N-linked (GlcNAc...) asparagine glycosylation is found at Asn-129, Asn-201, Asn-229, Asn-250, and Asn-317. Asp-340 (proton donor) is an active-site residue. N-linked (GlcNAc...) asparagine glycans are attached at residues Asn-392 and Asn-447.

The protein belongs to the histidine acid phosphatase family. Post-translationally, glycosylated during secretion across the membrane.

It localises to the secreted. The enzyme catalyses a phosphate monoester + H2O = an alcohol + phosphate. In Kluyveromyces lactis (strain ATCC 8585 / CBS 2359 / DSM 70799 / NBRC 1267 / NRRL Y-1140 / WM37) (Yeast), this protein is Repressible acid phosphatase (PHO5).